The following is a 233-amino-acid chain: 7-cyano-7-deazaguanine synthase (233 aa).

7–17 (LSGGLDSAVTS) contributes to the ATP binding site. Cys195, Cys206, Cys209, and Cys212 together coordinate Zn(2+).

Belongs to the QueC family. It depends on Zn(2+) as a cofactor.

The catalysed reaction is 7-carboxy-7-deazaguanine + NH4(+) + ATP = 7-cyano-7-deazaguanine + ADP + phosphate + H2O + H(+). It functions in the pathway purine metabolism; 7-cyano-7-deazaguanine biosynthesis. Catalyzes the ATP-dependent conversion of 7-carboxy-7-deazaguanine (CDG) to 7-cyano-7-deazaguanine (preQ(0)). The polypeptide is 7-cyano-7-deazaguanine synthase (Methanococcus maripaludis (strain DSM 14266 / JCM 13030 / NBRC 101832 / S2 / LL)).